Reading from the N-terminus, the 1000-residue chain is Probable coatomer subunit beta' (1000 aa).

7 WD repeats span residues 13–52 (ARSD…LVKS), 55–94 (VCDV…RVHQ), 97–136 (AHSD…AMKQ), 140–180 (GHTH…PNFT), 183–224 (GHEK…CVQT), 227–266 (GHAQ…LETT), and 351–391 (LGSS…NKDF). The interval 863–1000 (PRQTETQLKA…MDDLNLDEED (138 aa)) is disordered. The span at 901–915 (EPEEEEEQEEFDDDQ) shows a compositional bias: acidic residues. Over residues 960–969 (SASSQQSAQD) the composition is skewed to low complexity. The segment covering 970-1000 (FQDDTQWSDEDFGDAENGDLNMDDLNLDEED) has biased composition (acidic residues).

The protein belongs to the WD repeat COPB2 family. As to quaternary structure, oligomeric complex that consists of at least the alpha, beta, beta', gamma, delta, epsilon and zeta subunits.

The protein resides in the cytoplasm. It localises to the golgi apparatus membrane. Its subcellular location is the cytoplasmic vesicle. The protein localises to the COPI-coated vesicle membrane. In terms of biological role, the coatomer is a cytosolic protein complex that binds to dilysine motifs and reversibly associates with Golgi non-clathrin-coated vesicles, which further mediate biosynthetic protein transport from the ER, via the Golgi up to the trans Golgi network. Coatomer complex is required for budding from Golgi membranes, and is essential for the retrograde Golgi-to-ER transport of dilysine-tagged proteins. The polypeptide is Probable coatomer subunit beta' (copb-2) (Caenorhabditis elegans).